Here is a 202-residue protein sequence, read N- to C-terminus: Probable 1-Cys peroxiredoxin (202 aa).

Positions 1–148 (STHGKIRIHD…VVRAVDSLLT (148 aa)) constitute a Thioredoxin domain. C30 (cysteine sulfenic acid (-SOH) intermediate) is an active-site residue. Positions 178–201 (KKLFPQGFETKDLPSKKGYLRFTK) match the Bipartite nuclear localization signal motif.

The protein belongs to the peroxiredoxin family. Prx6 subfamily. In terms of tissue distribution, embryos.

It is found in the nucleus. Its subcellular location is the cytoplasm. The catalysed reaction is a hydroperoxide + [thioredoxin]-dithiol = an alcohol + [thioredoxin]-disulfide + H2O. In terms of biological role, thiol-specific peroxidase that catalyzes the reduction of hydrogen peroxide and organic hydroperoxides to water and alcohols, respectively. Seems to contribute to the inhibition of germination during stress. This chain is Probable 1-Cys peroxiredoxin, found in Bromus secalinus (Rye brome).